Here is a 370-residue protein sequence, read N- to C-terminus: MAAVTPKLGRAQRLVVKIGSALLVNGAGLRAEWLRALCDDVAQARARGTDVVLVSSGAIALGRQVLGLPAGPLRVEQSQAAAAVGQIKLARAYEEALAPHGVKTAQLLVTLDDTTDRRRYLNSRATMQTLLGLGVVPIVNENDTVATDEIRFGDNDRLAAQIAVTCGADQLLLLSDVDGLYTANPKTDPTARHLPVVGQITPEIEAMGGDPISGVSKGGMKTKLLAARTAVAGGCAMAIAEGSVLNPLSAVAQGARVTWFLPDTDPQAARKRWIAAMKPKGEITVDAGAALALGQGKSLLPAGVTAVSGRFGRGDPVVVLDGKGGRLASGLVRYSSTEARAIAGHRSDEIEGILGYPGRAALIHRDDMVV.

Residue Lys-17 coordinates ATP. Ser-56, Asp-143, and Asn-155 together coordinate substrate. ATP is bound at residue 175–176; it reads SD. Positions 280-357 constitute a PUA domain; the sequence is KGEITVDAGA…DEIEGILGYP (78 aa).

Belongs to the glutamate 5-kinase family.

It localises to the cytoplasm. The catalysed reaction is L-glutamate + ATP = L-glutamyl 5-phosphate + ADP. Its pathway is amino-acid biosynthesis; L-proline biosynthesis; L-glutamate 5-semialdehyde from L-glutamate: step 1/2. Its function is as follows. Catalyzes the transfer of a phosphate group to glutamate to form L-glutamate 5-phosphate. In Paracoccus denitrificans (strain Pd 1222), this protein is Glutamate 5-kinase.